Consider the following 241-residue polypeptide: Microneme antigen (241 aa).

Positions 1-34 are cleaved as a signal peptide; sequence MRLPIRFPKYVLYGMASAVWSILFLHILVGDTMS. Positions 35-103 are excised as a propeptide; it reads AADALSWSGG…ATGRGPSFVH (69 aa). Residues 61 to 83 show a composition bias toward basic and acidic residues; the sequence is HEMGKELEQQHGAEEQQMQRDTK. A disordered region spans residues 61–92; it reads HEMGKELEQQHGAEEQQMQRDTKPAAFSNPPH. 2 PAN domains span residues 112–181 and 185–241; these read CFPH…PRSC and CTDN…FNKS. Cystine bridges form between Cys-112–Cys-181, Cys-137–Cys-159, Cys-141–Cys-147, Cys-185–Cys-189, Cys-210–Cys-230, and Cys-214–Cys-220. Ser-121 is a binding site for a carbohydrate. A carbohydrate-binding residues include Lys-162, Tyr-169, and Asp-174.

It belongs to the microneme antigen family. As to quaternary structure, homodimer or heterodimer of major microneme antigen and microneme antigen. In terms of processing, contains six disulfide bonds.

Its subcellular location is the cytoplasmic vesicle. It localises to the secretory vesicle. The protein resides in the microneme. Galactose-binding lectin. Plays a role in adhesion to the host cell. Has a potential role in invasion of host cells. The chain is Microneme antigen from Sarcocystis muris.